Reading from the N-terminus, the 1493-residue chain is Mitogen-activated protein kinase kinase kinase 1 (1493 aa).

A compositionally biased stretch (low complexity) spans methionine 1–glutamate 23. Disordered stretches follow at residues methionine 1–arginine 178 and histidine 194–serine 300. Alanine 2 bears the N-acetylalanine mark. At serine 21 the chain carries Phosphoserine. The segment covering alanine 24–glutamine 35 has biased composition (gly residues). Residues glycine 36–glycine 46 are compositionally biased toward low complexity. The span at proline 89–glutamate 99 shows a compositional bias: pro residues. Residues alanine 140–glycine 156 show a composition bias toward low complexity. Serine 142 carries the phosphoserine modification. Residues arginine 157–arginine 178 are compositionally biased toward basic and acidic residues. Residues serine 235–serine 256 show a composition bias toward low complexity. At serine 270 the chain carries Phosphoserine. Threonine 280 is modified (phosphothreonine). Serine 287, serine 292, and serine 295 each carry phosphoserine. Residues tyrosine 333–phenylalanine 361 form an SWIM-type zinc finger. A compositionally biased stretch (low complexity) spans serine 411–asparagine 428. Positions serine 411–lysine 431 are disordered. An RING-type zinc finger spans residues cysteine 438 to arginine 487. Serine 502 and serine 526 each carry phosphoserine. Disordered stretches follow at residues serine 506–glutamine 531 and glutamate 895–alanine 914. The span at alanine 512 to glutamine 527 shows a compositional bias: low complexity. Serine 915 bears the Phosphoserine mark. Disordered regions lie at residues serine 927–serine 957 and proline 992–leucine 1066. Residues alanine 998 to asparagine 1013 are compositionally biased toward polar residues. 2 positions are modified to phosphoserine: serine 999 and serine 1024. The segment covering glycine 1049–threonine 1063 has biased composition (polar residues). Residues tryptophan 1224–phenylalanine 1489 form the Protein kinase domain. ATP-binding positions include isoleucine 1230 to cysteine 1238 and lysine 1253. Aspartate 1350 functions as the Proton acceptor in the catalytic mechanism. Threonine 1381 and threonine 1393 each carry phosphothreonine; by autocatalysis.

This sequence belongs to the protein kinase superfamily. STE Ser/Thr protein kinase family. MAP kinase kinase kinase subfamily. As to quaternary structure, binds both upstream activators and downstream substrates in multimolecular complexes through its N-terminus. Oligomerizes after binding MAP4K2 or TRAF2. Interacts with AXIN1. Interacts (via the kinase catalytic domain) with STK38. Interacts with GRIPAP1. Requires Mg(2+) as cofactor. In terms of processing, autophosphorylated. As to expression, highly expressed in the heart and spleen while a lower level expression is seen in the liver.

It carries out the reaction L-seryl-[protein] + ATP = O-phospho-L-seryl-[protein] + ADP + H(+). The enzyme catalyses L-threonyl-[protein] + ATP = O-phospho-L-threonyl-[protein] + ADP + H(+). Its activity is regulated as follows. Activated by autophosphorylation on Thr-1381 and Thr-1393 following oligomerization. Its function is as follows. Component of a protein kinase signal transduction cascade. Activates the ERK and JNK kinase pathways by phosphorylation of MAP2K1 and MAP2K4. May phosphorylate the MAPK8/JNK1 kinase. Activates CHUK and IKBKB, the central protein kinases of the NF-kappa-B pathway. The polypeptide is Mitogen-activated protein kinase kinase kinase 1 (Map3k1) (Mus musculus (Mouse)).